The chain runs to 168 residues: Photosystem I assembly protein Ycf3 (168 aa).

TPR repeat units lie at residues 35 to 68, 72 to 105, and 120 to 153; these read AFTY…EIDP, SYIL…NPFL, and GEQA…TPGN.

The protein belongs to the Ycf3 family.

The protein localises to the plastid. Its subcellular location is the chloroplast thylakoid membrane. In terms of biological role, essential for the assembly of the photosystem I (PSI) complex. May act as a chaperone-like factor to guide the assembly of the PSI subunits. The protein is Photosystem I assembly protein Ycf3 of Chloranthus spicatus (Chulantree).